The sequence spans 157 residues: DNA gyrase inhibitor 2 (157 aa).

Belongs to the DNA gyrase inhibitor family. As to quaternary structure, interacts with DNA gyrase.

It is found in the cytoplasm. Its function is as follows. Inhibits the supercoiling activity of DNA gyrase. Acts by inhibiting DNA gyrase at an early step, prior to (or at the step of) binding of DNA by the gyrase. It protects cells against toxins that target DNA gyrase, by inhibiting activity of these toxins and reducing the formation of lethal double-strand breaks in the cell. This chain is DNA gyrase inhibitor 2, found in Dickeya dadantii (strain 3937) (Erwinia chrysanthemi (strain 3937)).